Consider the following 427-residue polypeptide: Glutamate-1-semialdehyde 2,1-aminomutase (427 aa).

Lys-265 is modified (N6-(pyridoxal phosphate)lysine).

It belongs to the class-III pyridoxal-phosphate-dependent aminotransferase family. HemL subfamily. Homodimer. Pyridoxal 5'-phosphate serves as cofactor.

The protein localises to the cytoplasm. The enzyme catalyses (S)-4-amino-5-oxopentanoate = 5-aminolevulinate. Its pathway is porphyrin-containing compound metabolism; protoporphyrin-IX biosynthesis; 5-aminolevulinate from L-glutamyl-tRNA(Glu): step 2/2. The protein is Glutamate-1-semialdehyde 2,1-aminomutase of Burkholderia lata (strain ATCC 17760 / DSM 23089 / LMG 22485 / NCIMB 9086 / R18194 / 383).